The following is a 1410-amino-acid chain: Endoribonuclease Dicer homolog 2a (1410 aa).

Positions M1–G15 are enriched in gly residues. The disordered stretch occupies residues M1 to P30. In terms of domain architecture, Helicase ATP-binding spans A41–I222. L54–T61 lines the ATP pocket. A DECH box motif is present at residues D163 to H166. A Helicase C-terminal domain is found at T388–R561. One can recognise a Dicer dsRNA-binding fold domain in the interval S569–E655. Residues K827–M942 enclose the PAZ domain. RNase III domains lie at S969–G1124 and V1161–K1308. Residues E1200, D1294, and E1297 each coordinate Mg(2+). In terms of domain architecture, DRBM spans D1334–A1400.

The protein belongs to the helicase family. Dicer subfamily. May interact with ARGONAUTE1 or PINHEAD through their common PAZ domains. Mg(2+) serves as cofactor. The cofactor is Mn(2+).

It localises to the nucleus. In terms of biological role, probably involved in the RNA silencing pathway. May cleave double-stranded RNA to produce short 21-24 nucleotides (nt) RNAs which target the selective destruction of complementary RNAs. This is Endoribonuclease Dicer homolog 2a (DCL2A) from Oryza sativa subsp. japonica (Rice).